The sequence spans 311 residues: Pyrimidine-specific ribonucleoside hydrolase RihA (311 aa).

Residue His-240 is part of the active site.

Belongs to the IUNH family. RihA subfamily.

Functionally, hydrolyzes cytidine or uridine to ribose and cytosine or uracil, respectively. This chain is Pyrimidine-specific ribonucleoside hydrolase RihA, found in Klebsiella pneumoniae (strain 342).